The primary structure comprises 83 residues: Small ribosomal subunit protein bS16 (83 aa).

This sequence belongs to the bacterial ribosomal protein bS16 family.

The sequence is that of Small ribosomal subunit protein bS16 from Pseudomonas putida (strain W619).